Here is a 143-residue protein sequence, read N- to C-terminus: Nucleoside diphosphate kinase (143 aa).

ATP is bound by residues K11, F59, R87, T93, R104, and N114. Residue H117 is the Pros-phosphohistidine intermediate of the active site.

The protein belongs to the NDK family. In terms of assembly, homotetramer. The cofactor is Mg(2+).

Its subcellular location is the cytoplasm. The enzyme catalyses a 2'-deoxyribonucleoside 5'-diphosphate + ATP = a 2'-deoxyribonucleoside 5'-triphosphate + ADP. The catalysed reaction is a ribonucleoside 5'-diphosphate + ATP = a ribonucleoside 5'-triphosphate + ADP. Its function is as follows. Major role in the synthesis of nucleoside triphosphates other than ATP. The ATP gamma phosphate is transferred to the NDP beta phosphate via a ping-pong mechanism, using a phosphorylated active-site intermediate. This is Nucleoside diphosphate kinase from Shewanella loihica (strain ATCC BAA-1088 / PV-4).